The chain runs to 155 residues: Ribosomal RNA large subunit methyltransferase H (155 aa).

Residues Leu-73, Gly-104, and 123–128 (LSPLTL) contribute to the S-adenosyl-L-methionine site.

Belongs to the RNA methyltransferase RlmH family. In terms of assembly, homodimer.

It is found in the cytoplasm. The catalysed reaction is pseudouridine(1915) in 23S rRNA + S-adenosyl-L-methionine = N(3)-methylpseudouridine(1915) in 23S rRNA + S-adenosyl-L-homocysteine + H(+). Its function is as follows. Specifically methylates the pseudouridine at position 1915 (m3Psi1915) in 23S rRNA. The polypeptide is Ribosomal RNA large subunit methyltransferase H (Pseudomonas aeruginosa (strain LESB58)).